A 304-amino-acid chain; its full sequence is MTVRESAARTAAPSRGTWLEHEPLAGHTSWRVGGPAERFYQPADLDDLVQFLRALSPQEPLFWLGLGSNVLVRDGGIRGTVVCTKNRLRVIEARGPACVYAEAGIPCAHVARFCTERDWVGAEFLAGIPGTLGGALAMNAGAFGGETWSLVRRVLTVNRGGRTIWRAPEEFEVGYRHVQGPEGEWFVAAELELAPGDGRAGRERIKALLARRSATQPTHQPSCGSVFRNPPSDFAARLIEACGLKGHTVGGAQVSLKHANFIVNSGDATAADIETLIAEVRDRVALLCGVWLEPEVRIVGEAQA.

Residues 31-196 (RVGGPAERFY…VAAELELAPG (166 aa)) enclose the FAD-binding PCMH-type domain. R176 is a catalytic residue. Catalysis depends on S225, which acts as the Proton donor. The active site involves E295.

The protein belongs to the MurB family. The cofactor is FAD.

The protein localises to the cytoplasm. The enzyme catalyses UDP-N-acetyl-alpha-D-muramate + NADP(+) = UDP-N-acetyl-3-O-(1-carboxyvinyl)-alpha-D-glucosamine + NADPH + H(+). The protein operates within cell wall biogenesis; peptidoglycan biosynthesis. In terms of biological role, cell wall formation. In Methylococcus capsulatus (strain ATCC 33009 / NCIMB 11132 / Bath), this protein is UDP-N-acetylenolpyruvoylglucosamine reductase.